Here is a 235-residue protein sequence, read N- to C-terminus: 15,16-dihydrobiliverdin:ferredoxin oxidoreductase (235 aa).

Belongs to the HY2 family.

The catalysed reaction is 15,16-dihydrobiliverdin + oxidized 2[4Fe-4S]-[ferredoxin] = biliverdin IXalpha + reduced 2[4Fe-4S]-[ferredoxin] + 2 H(+). Catalyzes the two-electron reduction of biliverdin IX-alpha at the C15 methine bridge. This chain is 15,16-dihydrobiliverdin:ferredoxin oxidoreductase, found in Synechococcus sp. (strain CC9902).